We begin with the raw amino-acid sequence, 90 residues long: Cluster 41 protein AFLA_114800 (90 aa).

Residues 55–77 (GLLLLCCFYPIGNLILLVRLSLV) form a helical membrane-spanning segment. Asn80 carries N-linked (GlcNAc...) asparagine glycosylation.

It localises to the membrane. Its function is as follows. Cluster 41 protein; part of the gene cluster 41 that mediates the biosynthesis of an extracellular and diffusible metabolite that is able to stimulate colony sclerotial production. The polypeptide is Cluster 41 protein AFLA_114800 (Aspergillus flavus (strain ATCC 200026 / FGSC A1120 / IAM 13836 / NRRL 3357 / JCM 12722 / SRRC 167)).